A 179-amino-acid chain; its full sequence is Ubiquitin-conjugating enzyme E2 C (179 aa).

The tract at residues 1–31 is disordered; the sequence is MASQNRDPAATSVAAARKGAEPSGGAARGPV. A2 bears the N-acetylalanine mark. A Phosphoserine modification is found at S3. One can recognise a UBC core domain in the interval 30–175; the sequence is PVGKRLQQEL…LQETYSKQVT (146 aa). The active-site Glycyl thioester intermediate is the C114.

It belongs to the ubiquitin-conjugating enzyme family. In terms of assembly, component of the APC/C complex, composed of at least 14 distinct subunits that assemble into a complex of at least 19 chains with a combined molecular mass of around 1.2 MDa. Within this complex, directly interacts with ANAPC2. Autoubiquitinated by the APC/C complex, leading to its degradation by the proteasome. Its degradation plays a central role in APC/C regulation, allowing cyclin-A accumulation before S phase entry. APC/C substrates inhibit the autoubiquitination of UBE2C/UBCH10 but not its E2 function, hence APC/C remaining active until its substrates have been destroyed.

The enzyme catalyses S-ubiquitinyl-[E1 ubiquitin-activating enzyme]-L-cysteine + [E2 ubiquitin-conjugating enzyme]-L-cysteine = [E1 ubiquitin-activating enzyme]-L-cysteine + S-ubiquitinyl-[E2 ubiquitin-conjugating enzyme]-L-cysteine.. It catalyses the reaction S-ubiquitinyl-[E1 ubiquitin-activating enzyme]-L-cysteine + [acceptor protein]-L-lysine = [E1 ubiquitin-activating enzyme]-L-cysteine + N(6)-monoubiquitinyl-[acceptor protein]-L-lysine.. It functions in the pathway protein modification; protein ubiquitination. Functionally, accepts ubiquitin from the E1 complex and catalyzes its covalent attachment to other proteins. In vitro catalyzes 'Lys-11'- and 'Lys-48'-linked polyubiquitination. Acts as an essential factor of the anaphase promoting complex/cyclosome (APC/C), a cell cycle-regulated ubiquitin ligase that controls progression through mitosis. Acts by initiating 'Lys-11'-linked polyubiquitin chains on APC/C substrates, leading to the degradation of APC/C substrates by the proteasome and promoting mitotic exit. The sequence is that of Ubiquitin-conjugating enzyme E2 C (UBE2C) from Homo sapiens (Human).